A 166-amino-acid polypeptide reads, in one-letter code: Ribosome-binding factor A (166 aa).

The disordered stretch occupies residues 122–166 (HVADETDVEDSTDHEDDVTNSEDETKHVDIDTDSEEGTNTDGKAQ). The span at 126-143 (ETDVEDSTDHEDDVTNSE) shows a compositional bias: acidic residues.

Belongs to the RbfA family. In terms of assembly, monomer. Binds 30S ribosomal subunits, but not 50S ribosomal subunits or 70S ribosomes.

The protein localises to the cytoplasm. Its function is as follows. One of several proteins that assist in the late maturation steps of the functional core of the 30S ribosomal subunit. Associates with free 30S ribosomal subunits (but not with 30S subunits that are part of 70S ribosomes or polysomes). Required for efficient processing of 16S rRNA. May interact with the 5'-terminal helix region of 16S rRNA. This is Ribosome-binding factor A from Pseudoalteromonas translucida (strain TAC 125).